We begin with the raw amino-acid sequence, 317 residues long: Zinc finger protein CRM3 (317 aa).

Positions 1–15 are enriched in low complexity; it reads MNFSLSKQSSEKQSS. The segment at 1 to 22 is disordered; it reads MNFSLSKQSSEKQSSYTDKSRS. 2 C2H2-type zinc fingers span residues 254-276 and 282-306; these read KQCP…YLIH and FKCT…LKSH.

The protein resides in the nucleus. Its function is as follows. Probable transcription factor involved in the regulation of the transcription of genes involved in cell rescue and defense, as well as cell cycle and DNA processing. In Saccharomyces cerevisiae (strain ATCC 204508 / S288c) (Baker's yeast), this protein is Zinc finger protein CRM3.